The chain runs to 142 residues: Hemoglobin subunit alpha-2 (142 aa).

One can recognise a Globin domain in the interval L2–R142. An O2-binding site is contributed by H59. H88 provides a ligand contact to heme b.

The protein belongs to the globin family. As to quaternary structure, heterotetramer of two alpha chains and two beta chains. In terms of tissue distribution, red blood cells.

Functionally, involved in oxygen transport from the lung to the various peripheral tissues. This Xenopus laevis (African clawed frog) protein is Hemoglobin subunit alpha-2 (hba2).